The chain runs to 255 residues: Biotin carboxyl carrier protein of acetyl-CoA carboxylase 2, chloroplastic (255 aa).

A chloroplast-targeting transit peptide spans 1–87 (MASLSVPCVK…TNVPEPAELS (87 aa)). The tract at residues 148 to 193 (PPAQPVALPPSPTPTSTPATAKPTSAPSSSHPPLKSPMAGTFYRSP) is disordered. The span at 149–162 (PAQPVALPPSPTPT) shows a compositional bias: pro residues. Positions 163-180 (STPATAKPTSAPSSSHPP) are enriched in low complexity. The Biotinyl-binding domain occupies 178–254 (HPPLKSPMAG…SVDTPLFVIA (77 aa)). Position 220 is an N6-biotinyllysine (Lys-220).

As to quaternary structure, acetyl-CoA carboxylase is a heterohexamer composed of biotin carboxyl carrier protein, biotin carboxylase and 2 subunits each of ACCase subunit alpha and ACCase plastid-coded subunit beta (accD). In terms of tissue distribution, primarily expressed in 7 to 10 days after flowering seeds at levels approximately 2-fold less abundant than BCCP1.

Its subcellular location is the plastid. The protein localises to the chloroplast. The protein operates within lipid metabolism; fatty acid biosynthesis. This protein is a component of the acetyl coenzyme A carboxylase complex; first, biotin carboxylase catalyzes the carboxylation of the carrier protein and then the transcarboxylase transfers the carboxyl group to form malonyl-CoA. This is Biotin carboxyl carrier protein of acetyl-CoA carboxylase 2, chloroplastic (BCCP2) from Arabidopsis thaliana (Mouse-ear cress).